The chain runs to 366 residues: Chorismate synthase (366 aa).

Residues Arg48 and Arg54 each contribute to the NADP(+) site. Residues 125–127 (RSS), 241–242 (NA), Gly285, 300–304 (KPTSS), and Arg326 each bind FMN.

It belongs to the chorismate synthase family. In terms of assembly, homotetramer. It depends on FMNH2 as a cofactor.

The catalysed reaction is 5-O-(1-carboxyvinyl)-3-phosphoshikimate = chorismate + phosphate. It participates in metabolic intermediate biosynthesis; chorismate biosynthesis; chorismate from D-erythrose 4-phosphate and phosphoenolpyruvate: step 7/7. In terms of biological role, catalyzes the anti-1,4-elimination of the C-3 phosphate and the C-6 proR hydrogen from 5-enolpyruvylshikimate-3-phosphate (EPSP) to yield chorismate, which is the branch point compound that serves as the starting substrate for the three terminal pathways of aromatic amino acid biosynthesis. This reaction introduces a second double bond into the aromatic ring system. The protein is Chorismate synthase of Cereibacter sphaeroides (strain ATCC 17023 / DSM 158 / JCM 6121 / CCUG 31486 / LMG 2827 / NBRC 12203 / NCIMB 8253 / ATH 2.4.1.) (Rhodobacter sphaeroides).